The sequence spans 842 residues: GPI ethanolamine phosphate transferase 2 (842 aa).

Asparagine 186 carries N-linked (GlcNAc...) asparagine glycosylation. The chain crosses the membrane as a helical span at residues 409–429 (YNYPLLFIGCFLSIVITGTIY). Asparagine 441 carries N-linked (GlcNAc...) asparagine glycosylation. The next 2 helical transmembrane spans lie at 442–462 (TSILIAIAALMGISVFGSSFI) and 468–488 (FWWWIITGLVLLSMVNLNFSS). Asparagine 506 carries an N-linked (GlcNAc...) asparagine glycan. Residues 524–544 (GNIDALWWLNLITVTVVGLNL) form a helical membrane-spanning segment. N-linked (GlcNAc...) asparagine glycosylation occurs at asparagine 551. Residues 554–574 (VSLLGFSDLLSMGLLSMITFL) traverse the membrane as a helical segment. An N-linked (GlcNAc...) asparagine glycan is attached at asparagine 578. Helical transmembrane passes span 615–635 (IHTALIPLARIFFKLFFAVLV), 698–718 (YLLAVIFGIILQFFTFFQSGG), and 740–760 (IYVVGLMMCISNFAPTIYWSF). Asparagine 771 carries an N-linked (GlcNAc...) asparagine glycan. The next 2 helical transmembrane spans lie at 783 to 803 (YPFIIIQSTIGCCLLLACIIL) and 821 to 841 (MVWTIFVGIIVHWIPEILLLL).

This sequence belongs to the PIGG/PIGN/PIGO family. PIGG subfamily.

It is found in the endoplasmic reticulum membrane. It participates in glycolipid biosynthesis; glycosylphosphatidylinositol-anchor biosynthesis. Functionally, ethanolamine phosphate transferase involved in glycosylphosphatidylinositol-anchor biosynthesis. Transfers ethanolamine phosphate to the GPI second mannose. In Candida glabrata (strain ATCC 2001 / BCRC 20586 / JCM 3761 / NBRC 0622 / NRRL Y-65 / CBS 138) (Yeast), this protein is GPI ethanolamine phosphate transferase 2 (LAS21).